The chain runs to 2625 residues: Highly reducing polyketide synthase frbB (2625 aa).

Basic and acidic residues predominate over residues 1–10 (MRNIDEHMSE). Residues 1–25 (MRNIDEHMSERATLQSSGGYGERDS) are disordered. The region spanning 27-449 (VEPIAIIGMS…GTNAHVILDR (423 aa)) is the Ketosynthase family 3 (KS3) domain. Residues Cys200, His334, and His375 each act as for beta-ketoacyl synthase activity in the active site. A malonyl-CoA:ACP transacylase (MAT) domain region spans residues 563 to 883 (YVFSGQGAQY…DAASTLLTTI (321 aa)). Residues 942-1080 (HELLGNMSTD…GRIRAVLDDS (139 aa)) form an N-terminal hotdog fold region. The interval 942-1252 (HELLGNMSTD…GMILAKLPGG (311 aa)) is dehydratase (DH) domain. Positions 942–1255 (HELLGNMSTD…LAKLPGGTSR (314 aa)) constitute a PKS/mFAS DH domain. The active-site Proton acceptor; for dehydratase activity is His974. A C-terminal hotdog fold region spans residues 1102 to 1255 (VRFVSPSAFY…LAKLPGGTSR (154 aa)). Asp1167 serves as the catalytic Proton donor; for dehydratase activity. Residues 1490–1673 (YHQIKAYIAE…GFVDTEPVFR (184 aa)) form a methyltransferase (CMet) domain region. The segment at 1907–2220 (GLLETFHWKP…SGKHIGKVIL (314 aa)) is enoyl reductase (ER) domain. The interval 2261-2439 (AVYIVVGGLG…GYSINIGPVS (179 aa)) is ketoreductase (KR) domain. A Carrier domain is found at 2542–2619 (GAEAAVLTAI…HLARLAAEES (78 aa)). Ser2579 carries the post-translational modification O-(pantetheine 4'-phosphoryl)serine.

It functions in the pathway antifungal biosynthesis. In terms of biological role, highly reducing polyketide synthase; part of the gene cluster that mediates the biosynthesis of the antifungal antibiotic FR901469, an inhibitor of beta-1,3-glucansynthase, exerting antifungal activity against the pathogenes Candida albicans and Aspergillus fumigatus. FR901469 is a cyclic depsipeptide containing 12 amino acid residues and a fatty acid chain. The NRPS frbI contains 12 modules responsible for the formation of the depsipeptide backbone which is denoted as Acyl-Thr-Ala-Tyr-Val-4OHPro-Thr-Thr-3OHPro-threo3OHGln-Gly-Thr-Orn-OH (C71H116N14O23). The PKS frbB is probably involved in the production of the hydrocarbon chain, and the acyl-CoA ligase frbC might be involved in the transport of the chain to the peptide ptoduct of frbI. Because FR901469 contains 3 hydroxylated amino acid residues, the 3 oxygenases frbA, frbH, and frbJ might be participating in amino acid hydroxylation. As no thioesterase domains were detected in frbI or frbB, the thioesterases frbD and frbE may instead release and cyclize the products of the NRPS and PKS, respectively. This Dothideomycetidae sp. (strain 11243) (Fungal sp. (strain No.11243)) protein is Highly reducing polyketide synthase frbB.